The following is a 587-amino-acid chain: Kelch-like protein 3 (587 aa).

Serine 10 carries the phosphoserine modification. One can recognise a BTB domain in the interval 50-117 (CDVMIVAEDV…IYTAEIEVTE (68 aa)). Residues 152-254 (CLGIRAFADV…PRDYLVQTVE (103 aa)) form the BACK domain. Threonine 295 is modified (phosphothreonine). Kelch repeat units follow at residues 302-347 (VMIV…FMAG), 348-394 (HVYA…VLND), 396-441 (LYAV…VVEG), 442-490 (KLYA…VLSG), 491-537 (QLYA…AVNG), and 539-585 (LYVV…VIHK). At threonine 375 the chain carries Phosphothreonine. At serine 376 the chain carries Phosphoserine. Serine 433 carries the phosphoserine; by PKA and PKC modification.

Belongs to the KLHL3 family. In terms of assembly, homodimer. Component of the BCR(KLHL3) E3 ubiquitin ligase complex, at least composed of CUL3 and KLHL3 and RBX1. Interacts with CLDN8. Phosphorylation at Ser-433 by PKA or PKC decreases the interaction with WNK1 and WNK4, leading to inhibit their degradation by the BCR(KLHL3) complex. Phosphorylated at Ser-433 by PKC in response to angiotensin II signaling, decreasing ability to promote degradation of WNK1 and WNK4, leading to activation of Na-Cl cotransporter SLC12A3/NCC. Phosphorylation at Ser-433 is increased by insulin. Dephosphorylated at Ser-433 by calcineurin PPP3CA, promoting degradation of WNK1 and WNK4. As to expression, widely expressed.

Its subcellular location is the cytoplasm. The protein resides in the cytosol. The protein localises to the cytoskeleton. It participates in protein modification; protein ubiquitination. Its function is as follows. Substrate-specific adapter of a BCR (BTB-CUL3-RBX1) E3 ubiquitin ligase complex that acts as a regulator of ion transport in the distal nephron. The BCR(KLHL3) complex acts by mediating ubiquitination and degradation of WNK1 and WNK4, two activators of Na-Cl cotransporter SLC12A3/NCC in distal convoluted tubule cells of kidney, thereby regulating NaCl reabsorption. The BCR(KLHL3) complex also mediates ubiquitination and degradation of WNK3. The BCR(KLHL3) complex also mediates ubiquitination of CLDN8, a tight-junction protein required for paracellular chloride transport in the kidney, leading to its degradation. The polypeptide is Kelch-like protein 3 (Homo sapiens (Human)).